Here is a 364-residue protein sequence, read N- to C-terminus: Coproporphyrin III ferrochelatase (364 aa).

Fe-coproporphyrin III-binding residues include Arg-29 and Tyr-118. Fe(2+) contacts are provided by His-169 and Glu-250.

Belongs to the ferrochelatase family.

It localises to the cytoplasm. It catalyses the reaction Fe-coproporphyrin III + 2 H(+) = coproporphyrin III + Fe(2+). It participates in porphyrin-containing compound metabolism; protoheme biosynthesis. Functionally, involved in coproporphyrin-dependent heme b biosynthesis. Catalyzes the insertion of ferrous iron into coproporphyrin III to form Fe-coproporphyrin III. This Streptococcus pneumoniae (strain ATCC 700669 / Spain 23F-1) protein is Coproporphyrin III ferrochelatase.